We begin with the raw amino-acid sequence, 112 residues long: Glutaredoxin-C6 (112 aa).

The Glutaredoxin domain occupies 3–103; it reads LAKAKETVAS…PLLTEAGAIA (101 aa). A disulfide bridge connects residues C23 and C26.

The protein belongs to the glutaredoxin family. CPYC subfamily. The N-terminus is blocked. As to expression, expressed in aleurone layer.

It is found in the cytoplasm. In terms of biological role, has a glutathione-disulfide oxidoreductase activity in the presence of NADPH and glutathione reductase. Reduces low molecular weight disulfides and proteins. Possesses thioltransferase, dehydroascorbate reductase and GSH-dependent peroxidase activities in vitro. The polypeptide is Glutaredoxin-C6 (GRXC6) (Oryza sativa subsp. japonica (Rice)).